The following is a 427-amino-acid chain: Beta-porphyranase D (427 aa).

An N-terminal signal peptide occupies residues 1–19; the sequence is MILKQAILTLVLVNANLFA. Residues 23 to 45 form a disordered region; that stretch reads PKTYSSTDKETRQGPPKPPMGKR. Residues 32 to 308 enclose the GH16 domain; sequence ETRQGPPKPP…WVRAYRLVDV (277 aa). Substrate contacts are provided by tryptophan 73, arginine 76, glutamate 168, glutamate 173, and glutamate 272. The Nucleophile role is filled by glutamate 168. The active-site Proton donor is glutamate 173.

The protein belongs to the glycosyl hydrolase 16 family.

Its subcellular location is the periplasm. The catalysed reaction is Hydrolysis of beta-D-galactopyranose-(1-&gt;4)-alpha-L-galactopyranose-6-sulfate linkages in porphyran.. Functionally, cleaves the sulfated polysaccharide porphyran at the (1-&gt;4) linkages between beta-D-galactopyranose and alpha-L-galactopyranose-6-sulfate, forming mostly the disaccharide alpha-L-galactopyranose-6-sulfate-(1-&gt;3)-beta-D-galactose. The protein is Beta-porphyranase D (porD) of Zobellia galactanivorans (strain DSM 12802 / CCUG 47099 / CIP 106680 / NCIMB 13871 / Dsij).